We begin with the raw amino-acid sequence, 263 residues long: Tryptophan synthase alpha chain (263 aa).

Active-site proton acceptor residues include E49 and D60.

This sequence belongs to the TrpA family. In terms of assembly, tetramer of two alpha and two beta chains.

The enzyme catalyses (1S,2R)-1-C-(indol-3-yl)glycerol 3-phosphate + L-serine = D-glyceraldehyde 3-phosphate + L-tryptophan + H2O. It participates in amino-acid biosynthesis; L-tryptophan biosynthesis; L-tryptophan from chorismate: step 5/5. Functionally, the alpha subunit is responsible for the aldol cleavage of indoleglycerol phosphate to indole and glyceraldehyde 3-phosphate. In Clostridium kluyveri (strain NBRC 12016), this protein is Tryptophan synthase alpha chain.